We begin with the raw amino-acid sequence, 3177 residues long: Proliferation marker protein Ki-67 (3177 aa).

Residues 27–76 (CLFGRSIECDIRIQLPVVSKRHCKIEVKEQEAILYNFSSTNPTQVNGVTI) enclose the FHA domain. Composition is skewed to basic and acidic residues over residues 98 to 107 (EDGNHEDGSK) and 116 to 126 (LGKEPSRRASR). Disordered stretches follow at residues 98–442 (EDGN…PGLS) and 473–572 (RPEL…ASIS). Phosphoserine is present on residues Ser125, Ser128, and Ser162. Polar residues-rich tracts occupy residues 165–177 (SDGS…QDSS) and 202–221 (STGS…LSNS). Over residues 235-263 (MKEELDVKSQKSCRKSEPQPDRAAEESRE) the composition is skewed to basic and acidic residues. A Glycyl lysine isopeptide (Lys-Gly) (interchain with G-Cter in SUMO2) cross-link involves residue Lys236. Phosphoserine is present on residues Ser250, Ser276, Ser277, Ser286, and Ser287. Positions 276–286 (SSGSTPVTAAS) are enriched in polar residues. 2 positions are modified to phosphothreonine: Thr307 and Thr316. Ser321, Ser337, Ser373, Ser498, Ser503, and Ser588 each carry phosphoserine. Residues 455 to 618 (KSEGMPMKRR…VKQTQTKVAK (164 aa)) form a positively charged patch (CP) region. In terms of domain architecture, PP1-binding spans 462–509 (KRRRVSFGGHLRPELFDENLPPNTPLKRGETPTKRKSLGTHSPAVLKT). A disordered region spans residues 614–652 (TKVAKHVPQKQTSKRQRRPSTPKKPTSNLHNQFTTGHAN). The span at 616-634 (VAKHVPQKQTSKRQRRPST) shows a compositional bias: basic residues. A compositionally biased stretch (polar residues) spans 636-652 (KKPTSNLHNQFTTGHAN). At Thr701 the chain carries Phosphothreonine. Disordered stretches follow at residues 793–815 (LEKK…SKLR), 835–901 (VLAE…LGSQ), and 956–989 (KHSP…DKPI). Residues 855-864 (DQQVQDNENA) are compositionally biased toward polar residues. Basic and acidic residues-rich tracts occupy residues 867–882 (RCKE…EKTS) and 975–989 (LKEH…DKPI). 16 K167R repeats span residues 994–1101 (TRVL…FISP), 1108–1216 (KKIP…FQTP), 1228–1336 (SAKI…FQTP), 1348–1450 (SAKM…FQIP), 1461–1569 (KTKK…FQMP), 1582–1684 (TMLA…LFQT), 1696–1806 (KQTR…FQTP), 1817–1925 (ETTK…FQTP), 1937–2046 (SAKI…FQTP), 2059–2163 (VKMS…FQTP), 2175–2284 (SAKM…FQTP), 2296–2405 (SAKI…VFQT), 2419–2526 (AKLP…CQAP), 2537–2639 (KTPK…SFQE), 2643–2748 (KRIS…PIQT), and 2762–2870 (TQMP…ITQI). Glycyl lysine isopeptide (Lys-Gly) (interchain with G-Cter in SUMO2) cross-links involve residues Lys1013 and Lys1026. Ser1062 bears the Phosphoserine mark. A Glycyl lysine isopeptide (Lys-Gly) (interchain with G-Cter in SUMO1); alternate cross-link involves residue Lys1082. Lys1082 participates in a covalent cross-link: Glycyl lysine isopeptide (Lys-Gly) (interchain with G-Cter in SUMO2); alternate. Disordered stretches follow at residues 1109 to 1321 (KIPS…IRAQ) and 1334 to 1410 (QTPA…ENDC). Residue Ser1114 is modified to Phosphoserine. Residues 1114–1127 (SPHTQPVRTPASTK) are compositionally biased toward polar residues. At Thr1122 the chain carries Phosphothreonine. Ser1125 is subject to Phosphoserine. Thr1150 is subject to Phosphothreonine. Residue Ser1152 is modified to Phosphoserine. 2 positions are modified to phosphothreonine: Thr1159 and Thr1175. Ser1189 is modified (phosphoserine). Thr1215 carries the post-translational modification Phosphothreonine. Ser1235 is modified (phosphoserine). Thr1243, Thr1279, Thr1295, Thr1307, and Thr1315 each carry phosphothreonine. A compositionally biased stretch (basic residues) spans 1308 to 1317 (GHKRRPRTPK). Residue Lys1317 forms a Glycyl lysine isopeptide (Lys-Gly) (interchain with G-Cter in SUMO2) linkage. A Phosphothreonine modification is found at Thr1335. Positions 1353 to 1368 (LESSQAEPVKTPASTK) are enriched in polar residues. Position 1356 is a phosphoserine (Ser1356). Thr1363 carries the post-translational modification Phosphothreonine. Ser1366 carries the post-translational modification Phosphoserine. Residues 1371-1384 (SKTDLSKVDVREDP) show a composition bias toward basic and acidic residues. A phosphothreonine mark is found at Thr1400 and Thr1416. Ser1469 carries the post-translational modification Phosphoserine. Thr1477 carries the phosphothreonine modification. Ser1480 bears the Phosphoserine mark. Thr1513 carries the phosphothreonine modification. The disordered stretch occupies residues 1526 to 1550 (RKPAKRKLDSTAGMPNSKRMRCSSK). A phosphoserine mark is found at Ser1542 and Ser1587. Residue Lys1609 is modified to N6-acetyllysine. Lys1668 participates in a covalent cross-link: Glycyl lysine isopeptide (Lys-Gly) (interchain with G-Cter in SUMO2). Phosphothreonine occurs at positions 1684 and 1712. Ser1734 is subject to Phosphoserine. The tract at residues 1749–1797 (IPIGPEDDTENKGVKESTPQTLDSSASRTVSKRQQGAHEERPQFSGDLF) is disordered. Over residues 1765-1782 (STPQTLDSSASRTVSKRQ) the composition is skewed to polar residues. Residue Thr1766 is modified to Phosphothreonine. Residue Ser1779 is modified to Phosphoserine. Thr1805 bears the Phosphothreonine mark. Ser1825 carries the phosphoserine modification. Phosphothreonine occurs at positions 1859, 1868, 1884, and 1924. Positions 1925–2033 (PAGASDPVSV…QTPKIRAQPL (109 aa)) are disordered. Phosphoserine is present on Ser1944. Lys1966 carries the N6-acetyllysine modification. Phosphothreonine is present on residues Thr1989, Thr2005, and Thr2025. Residue Lys2027 forms a Glycyl lysine isopeptide (Lys-Gly) (interchain with G-Cter in SUMO1); alternate linkage. Residue Lys2027 forms a Glycyl lysine isopeptide (Lys-Gly) (interchain with G-Cter in SUMO2); alternate linkage. Position 2045 is a phosphothreonine (Thr2045). A disordered region spans residues 2047 to 2112 (AGANDSVTVE…SPGTPAPVQE (66 aa)). Residues 2063–2078 (LESSQAEPVKTPASTK) are compositionally biased toward polar residues. Residue Ser2065 is modified to Phosphoserine. Residue Thr2073 is modified to Phosphothreonine. Ser2076, Ser2095, and Ser2103 each carry phosphoserine. Over residues 2088 to 2101 (VDVREDPSILEKKT) the composition is skewed to basic and acidic residues. Phosphothreonine is present on residues Thr2106 and Thr2122. The tract at residues 2124–2343 (KQKLDFTGNS…PLSKSSCASQ (220 aa)) is disordered. Residues 2135–2144 (GHKRRPRTPK) show a composition bias toward basic residues. Thr2162 bears the Phosphothreonine mark. The span at 2180–2195 (LESSQAKPVKTPASTK) shows a compositional bias: polar residues. At Ser2182 the chain carries Phosphoserine. Thr2190 carries the phosphothreonine modification. Residue Ser2198 is modified to Phosphoserine. The residue at position 2218 (Thr2218) is a Phosphothreonine. A Phosphoserine modification is found at Ser2220. Phosphothreonine occurs at positions 2227, 2243, and 2283. Ser2303 carries the post-translational modification Phosphoserine. Residues Thr2311 and Thr2348 each carry the phosphothreonine modification. Basic residues predominate over residues 2378 to 2390 (RGKRQQRSCKKRS). Residues 2378 to 2447 (RGKRQQRSCK…RRQARTGLRK (70 aa)) form a disordered region. Phosphoserine occurs at positions 2390 and 2392. Thr2405 carries the phosphothreonine modification. 2 positions are modified to phosphoserine: Ser2423 and Ser2425. Lys2451 participates in a covalent cross-link: Glycyl lysine isopeptide (Lys-Gly) (interchain with G-Cter in SUMO1). Ser2464, Ser2487, Ser2545, and Ser2592 each carry phosphoserine. Positions 2538–2547 (TPKMPDKSPE) are enriched in basic and acidic residues. Disordered regions lie at residues 2538 to 2828 (TPKM…QVSK) and 2879 to 3160 (HDTS…DAKT). The segment covering 2605-2622 (VQKQDPSVSLTGRRNQPR) has biased composition (polar residues). Ser2649 bears the Phosphoserine mark. Composition is skewed to basic and acidic residues over residues 2673–2697 (GVKE…KEPV) and 2704–2714 (EEVKKSTKQKI). Residue Lys2675 forms a Glycyl lysine isopeptide (Lys-Gly) (interchain with G-Cter in SUMO1); alternate linkage. A Glycyl lysine isopeptide (Lys-Gly) (interchain with G-Cter in SUMO2); alternate cross-link involves residue Lys2675. Polar residues-rich tracts occupy residues 2764–2781 (MPCN…QSSP) and 2883–2892 (ILKSTQQQKP). Phosphoserine is present on residues Ser2768 and Ser2780. Over residues 2907–2923 (ASKEDPKEVLVDTRDHA) the composition is skewed to basic and acidic residues. Lys2909 participates in a covalent cross-link: Glycyl lysine isopeptide (Lys-Gly) (interchain with G-Cter in SUMO2). Residue Lys2928 is modified to N6-acetyllysine. The span at 2959 to 2971 (EATDEKPVPEKKR) shows a compositional bias: basic and acidic residues. Residue 2973–2980 (ASSKRHVS) participates in ATP binding. The residue at position 2980 (Ser2980) is a Phosphoserine. Positions 3008–3018 (KTEEMEAKREN) are enriched in basic and acidic residues. Residue Thr3021 is modified to Phosphothreonine. Positions 3039–3057 (PKFDASAENVGIKKNEKTM) are enriched in basic and acidic residues. Polar residues predominate over residues 3058–3067 (KTASQETELQ). Ser3061 is subject to Phosphoserine. Composition is skewed to basic and acidic residues over residues 3118-3132 (PQEE…DVRC) and 3140-3160 (VALD…DAKT).

As to quaternary structure, interacts with KIF15. Interacts (via the FHA domain) with NIFK. Interacts with PPP1CC. Component of a complex at least composed of ZNF335, HCFC1, CCAR2, EMSY, MKI67, RBBP5, ASH2L and WDR5; the complex is formed as a result of interactions between components of a nuclear receptor-mediated transcription complex and a histone methylation complex. Interacts with ZNF335. Post-translationally, hyperphosphorylated by CDK1 in mitosis; hyperphosphorylatiom prevents undergoing liquid-liquid phase separation. Dephosphorylated by PPP1CC at the onset of anaphase. Dephosphorylation by protein phosphatase 2A (PP2A) and simultaneous exposure of the positively charged patch (CP) during mitotic exit induce the RNA-dependent formation of a liquid-like condensed phase on the chromosome surface. In terms of processing, ubiquitinated by the APC/C complex after neuronal progenitors exit mitosis during brain development, leading to clearance from constitutive heterochromatin. In terms of tissue distribution, mainly present in proliferating cells (at protein level).

It is found in the chromosome. The protein localises to the nucleus. The protein resides in the nucleolus. Its function is as follows. Protein that associates with the surface of mitotic chromosomes and acts both as a chromosome repellent during early mitosis and chromosome attractant during late mitosis. Required to maintain individual mitotic chromosomes dispersed in the cytoplasm following nuclear envelope disassembly. During early mitosis, relocalizes from nucleoli to the chromosome surface where it forms extended brush structures that cover a substantial fraction of the chromosome surface. The MKI67 brush structure prevents chromosomes from collapsing into a single chromatin mass by forming a steric and electrostatic charge barrier: the protein has a high net electrical charge and acts as a surfactant, dispersing chromosomes and enabling independent chromosome motility. During mitotic anaphase, the MKI67 brush structure collapses and MKI67 switches from a chromosome repellent to a chromosome attractant to promote chromosome clustering and facilitate the exclusion of large cytoplasmic particles from the future nuclear space. Mechanistically, dephosphorylation during mitotic exit and simultaneous exposure of a conserved basic patch induce the RNA-dependent formation of a liquid-like condensed phase on the chromosome surface, promoting coalescence of neighboring chromosome surfaces and clustering of chromosomes. Binds premature ribosomal RNAs during anaphase; promoting liquid-liquid phase separation. Binds DNA, with a preference for supercoiled DNA and AT-rich DNA. Does not contribute to the internal structure of mitotic chromosomes. May play a role in chromatin organization; it is however unclear whether it plays a direct role in chromatin organization or whether it is an indirect consequence of its function in mitotic chromosome. This is Proliferation marker protein Ki-67 from Mus musculus (Mouse).